The primary structure comprises 324 residues: MDRERYDKVIEACSLSKDLEILSFGDQTVIGERGINLSGGQKQRIHIARALYQDADIYLFDDPFSAVDAHTGSHLFKEALRGLLCSKSVIYVTHQVEFLPSADLTLVMKDGRISQAGKYNDILISGTDFRELIGAHQESLAVVGSADASSVSENSALDEENGVVRDDIGFDGKQESQDLKNDKLDSGEPQRQFVQEEERAKGSVALDVYWKYITLAYGGALVPFILLGQILFQLLQIGSNYWMAWATPISEDVQAPVKLSTLMVVYVALAFGSSLCILVRATLLVTAGYKTATELFHKMHHCIFRSPMSFKIAKTCSKTCIYSS.

Residues 2 to 111 enclose the ABC transporter domain; the sequence is DRERYDKVIE…ADLTLVMKDG (110 aa). Transmembrane regions (helical) follow at residues 212–232 and 259–279; these read YITL…QILF and LSTL…CILV. An ABC transmembrane type-1 domain is found at 222–324; it reads VPFILLGQIL…TCSKTCIYSS (103 aa).

Belongs to the ABC transporter superfamily.

The protein resides in the membrane. The sequence is that of Probable non-intrinsic ABC protein 5 (NAP5) from Arabidopsis thaliana (Mouse-ear cress).